Consider the following 171-residue polypeptide: Photosystem I assembly protein Ycf3 (171 aa).

TPR repeat units follow at residues 35-68, 72-105, and 120-153; these read AFTYYRDGMSAQSEGEYAEALQNYYKAMRLEIDP, SYILYNIGLIHTSNGEHAKALEYYSQALERNPSL, and GEQAIQQGDPETSEAWFDQAAEYWKQAIALAPSN.

Belongs to the Ycf3 family.

The protein localises to the plastid. It localises to the chloroplast thylakoid membrane. In terms of biological role, essential for the assembly of the photosystem I (PSI) complex. May act as a chaperone-like factor to guide the assembly of the PSI subunits. This chain is Photosystem I assembly protein Ycf3, found in Angiopteris evecta (Mule's foot fern).